The chain runs to 150 residues: UPF0506 protein SJCHGC03144 (150 aa).

The N-terminal stretch at 1–18 (MNTCIQLLILCLVTVINS) is a signal peptide. 4 N-linked (GlcNAc...) asparagine glycosylation sites follow: Asn-20, Asn-36, Asn-52, and Asn-110. 3 disulfides stabilise this stretch: Cys-116–Cys-130, Cys-123–Cys-134, and Cys-129–Cys-139.

The protein belongs to the UPF0506 family.

The protein localises to the secreted. The chain is UPF0506 protein SJCHGC03144 from Schistosoma japonicum (Blood fluke).